The sequence spans 657 residues: Glycogen debranching enzyme (657 aa).

Residue D336 is the Nucleophile of the active site. E371 (proton donor) is an active-site residue. The disordered stretch occupies residues 460–479 (ANGEENRDGTNNNYSNNHGK).

This sequence belongs to the glycosyl hydrolase 13 family.

The catalysed reaction is Hydrolysis of (1-&gt;6)-alpha-D-glucosidic linkages to branches with degrees of polymerization of three or four glucose residues in limit dextrin.. Its pathway is glycan degradation; glycogen degradation. Removes maltotriose and maltotetraose chains that are attached by 1,6-alpha-linkage to the limit dextrin main chain, generating a debranched limit dextrin. In Escherichia coli O6:K15:H31 (strain 536 / UPEC), this protein is Glycogen debranching enzyme.